The following is a 440-amino-acid chain: Protein ABHD8 (440 aa).

The tract at residues 123–158 (DPAGSDGRSAPGSGSGSGSGSGSGGRRRRARRPKRT) is disordered. Low complexity predominate over residues 124 to 134 (PAGSDGRSAPG). Over residues 135–146 (SGSGSGSGSGSG) the composition is skewed to gly residues. Residues 147–158 (GRRRRARRPKRT) show a composition bias toward basic residues. The AB hydrolase-1 domain maps to 178–280 (VLFFIHGVGG…HKVIMINGGG (103 aa)). Active-site charge relay system residues include Ser253, Asp371, and His399.

The protein belongs to the AB hydrolase superfamily. In terms of assembly, interacts with NLRP3 (via NACHT and LLR domains); this interaction is enhanced in the presence of NLRP3 inflammasome inducers, such as ATP, nigericin, silica, or alum. Interacts with ZDHHC12.

It is found in the cytoplasm. Negatively regulates NLRP3-driven inflammation. Promotes NLRP3 degradation through the chaperone-mediated autophagy (CMA) pathway, hence attenuating inflammasome activation and IL1B secretion. Acts by recruiting palmitoyltransferase ZDHHC12 to NLRP3, facilitating NLRP3 palmitoylation and subsequent degradation. This is Protein ABHD8 from Macaca fascicularis (Crab-eating macaque).